A 329-amino-acid chain; its full sequence is MYQLKIEGQAPGTCGSGKSLLVSALANGIGFPYECASGGCGVCKFELLEGNVQSMWPDAPGLSSRDREKGNRHLACQCVALSDLRIKVAVQDKYVPTIPISRMEAEVVEVRALTHDLLSVRLRTDGPANFLPGQFCLVEAEQLPGVVRAYSMANLKNPEGIWEFYIKRVPTGRFSPWLFENRKEGARLFLTGPMGTSFFRPGTGRKSLCIGGGAGLSYAAAIARASMRETDKPVKLFYGSRTPRDAVRWIDIDIDEDKLEVVQAVTEDTDSLWQGPTGFIHQVVDAALLETLPEYEIYLAGPPPMVDATVRMLLGKGVPRDQIHFDAFF.

Positions 2–92 (YQLKIEGQAP…DLRIKVAVQD (91 aa)) constitute a 2Fe-2S ferredoxin-type domain. [2Fe-2S] cluster contacts are provided by Cys-35, Cys-40, Cys-43, and Cys-76. Residues 100–200 (ISRMEAEVVE…TGPMGTSFFR (101 aa)) enclose the FAD-binding FR-type domain.

Monomer. Carbazole 1,9a-dioxygenase complex consists of a terminal oxygenase component CarAa, a ferredoxin reductase component CarAd and a ferredoxin component CarAc. It depends on [2Fe-2S] cluster as a cofactor. FAD serves as cofactor.

The enzyme catalyses 2 reduced [2Fe-2S]-[ferredoxin] + NAD(+) + H(+) = 2 oxidized [2Fe-2S]-[ferredoxin] + NADH. The catalysed reaction is 2 reduced [2Fe-2S]-[ferredoxin] + NADP(+) + H(+) = 2 oxidized [2Fe-2S]-[ferredoxin] + NADPH. Its function is as follows. Part of the multicomponent carbazole 1,9a-dioxygenase (CARDO), that converts carbazole (CAR) into 2-aminobiphenyl-2,3-diol. It can use both NAD and NADP as electron donors, but NAD is supposed to be the physiological electron donor. This Metapseudomonas resinovorans (Pseudomonas resinovorans) protein is Ferredoxin--NAD(P)(+) reductase CarAd (carAd).